We begin with the raw amino-acid sequence, 182 residues long: MPLDLALKRKYYEEVRPELIRRFGYQNVWEVPRLEKVVINQGLGEAKEDARILEKAAQELALITGQKPAVTRAKKSISNFKLRKGMPIGLRVTLRRDRMWIFLEKLLNVALPRIRDFRGLNPNSFDGRGNYNLGLREQLIFPEITYDMVDALRGMDIAVVTTAETDEEARALLELLGFPFRK.

Belongs to the universal ribosomal protein uL5 family. As to quaternary structure, part of the 50S ribosomal subunit; part of the 5S rRNA/L5/L18/L25 subcomplex. Contacts the 5S rRNA and the P site tRNA. Forms a bridge to the 30S subunit in the 70S ribosome.

This is one of the proteins that bind and probably mediate the attachment of the 5S RNA into the large ribosomal subunit, where it forms part of the central protuberance. In the 70S ribosome it contacts protein S13 of the 30S subunit (bridge B1b), connecting the 2 subunits; this bridge is implicated in subunit movement. Contacts the P site tRNA; the 5S rRNA and some of its associated proteins might help stabilize positioning of ribosome-bound tRNAs. The sequence is that of Large ribosomal subunit protein uL5 from Thermus thermophilus (strain ATCC BAA-163 / DSM 7039 / HB27).